Reading from the N-terminus, the 214-residue chain is MAEESGQRAKGTVKWFSDQKGFGFITPDDGGEDLFVHQSGIRSEGFRSLAEGETVEFEVESGGDGRTKAVDVTGPDGAAVQGGRGGGGGGGGRGGGGYGGGSGGYGGGGRGGSRGYGGGDGGYGGGGGYGGGSRYGGGGGGYGGGGGYGGGGSGGGSGCFKCGESGHFARDCSQSGGGGGGGRFGGGGGGGGGGGCYKCGEDGHFARECTSGGR.

In terms of domain architecture, CSD spans 8–75 (RAKGTVKWFS…RTKAVDVTGP (68 aa)). The tract at residues 54 to 91 (TVEFEVESGGDGRTKAVDVTGPDGAAVQGGRGGGGGGG) is disordered. Over residues 80-91 (VQGGRGGGGGGG) the composition is skewed to gly residues. CCHC-type zinc fingers lie at residues 157–174 (SGCF…DCSQ) and 194–211 (GGCY…ECTS).

This chain is Glycine-rich protein 2 (GRP-2), found in Nicotiana sylvestris (Wood tobacco).